Reading from the N-terminus, the 395-residue chain is Subtilisin-like protease 5 (395 aa).

A signal peptide spans 1–19 (MGFLTVLYLSLAALSVTNA). A propeptide spanning residues 20–115 (AQIMSAPNGA…VEPDAIISQH (96 aa)) is cleaved from the precursor. One can recognise an Inhibitor I9 domain in the interval 36–112 (YIVVMKDDTS…VAFVEPDAII (77 aa)). The Peptidase S8 domain maps to 124–395 (PWGLSRLSNR…RRLLYNGSGR (272 aa)). Catalysis depends on charge relay system residues aspartate 155 and histidine 186. Residues asparagine 229 and asparagine 247 are each glycosylated (N-linked (GlcNAc...) asparagine). Residue serine 341 is the Charge relay system of the active site. The disordered stretch occupies residues 374 to 395 (QPTIHNPGPDTTRRLLYNGSGR). N-linked (GlcNAc...) asparagine glycosylation is present at asparagine 391.

It belongs to the peptidase S8 family.

It is found in the secreted. Functionally, secreted subtilisin-like serine protease with keratinolytic activity that contributes to pathogenicity. The protein is Subtilisin-like protease 5 (SUB5) of Arthroderma otae (strain ATCC MYA-4605 / CBS 113480) (Microsporum canis).